A 101-amino-acid chain; its full sequence is Urease subunit beta (101 aa).

It belongs to the urease beta subunit family. Heterotrimer of UreA (gamma), UreB (beta) and UreC (alpha) subunits. Three heterotrimers associate to form the active enzyme.

The protein resides in the cytoplasm. The catalysed reaction is urea + 2 H2O + H(+) = hydrogencarbonate + 2 NH4(+). The protein operates within nitrogen metabolism; urea degradation; CO(2) and NH(3) from urea (urease route): step 1/1. This Acaryochloris marina (strain MBIC 11017) protein is Urease subunit beta.